The sequence spans 748 residues: Polyribonucleotide nucleotidyltransferase (748 aa).

Mg(2+) is bound by residues aspartate 487 and aspartate 493. The 60-residue stretch at 554 to 613 (PSTTTIKIDKDKIRDIIGPSGKVIKEICETSGAKIDISDDGTVSVYASDRDKLKVALDKI) folds into the KH domain. The S1 motif domain maps to 623 to 691 (GEIFNGTVVK…NKGKAKLTIK (69 aa)). A disordered region spans residues 693-733 (ADKDKSSNNTKPKTHVNNTKDNSEPEQRRDSSKKRAWNEDN). Positions 699-712 (SNNTKPKTHVNNTK) are enriched in polar residues. The span at 713 to 722 (DNSEPEQRRD) shows a compositional bias: basic and acidic residues.

The protein belongs to the polyribonucleotide nucleotidyltransferase family. Mg(2+) is required as a cofactor.

The protein resides in the cytoplasm. The enzyme catalyses RNA(n+1) + phosphate = RNA(n) + a ribonucleoside 5'-diphosphate. Its function is as follows. Involved in mRNA degradation. Catalyzes the phosphorolysis of single-stranded polyribonucleotides processively in the 3'- to 5'-direction. This Rickettsia peacockii (strain Rustic) protein is Polyribonucleotide nucleotidyltransferase.